The primary structure comprises 612 residues: Threonine--tRNA ligase (612 aa).

Residues 218–509 (DHRKLGVELG…LSEHFWGNFP (292 aa)) are catalytic. Zn(2+) contacts are provided by Cys310, His361, and His486.

It belongs to the class-II aminoacyl-tRNA synthetase family. As to quaternary structure, homodimer. Zn(2+) is required as a cofactor.

It localises to the cytoplasm. The enzyme catalyses tRNA(Thr) + L-threonine + ATP = L-threonyl-tRNA(Thr) + AMP + diphosphate + H(+). Functionally, catalyzes the attachment of threonine to tRNA(Thr) in a two-step reaction: L-threonine is first activated by ATP to form Thr-AMP and then transferred to the acceptor end of tRNA(Thr). Also edits incorrectly charged L-seryl-tRNA(Thr). This is Threonine--tRNA ligase from Helicobacter acinonychis (strain Sheeba).